The primary structure comprises 66 residues: MPKQKTHRASAKRFKRTGSGGLKRFRAYTSHRFHGKTKKQRRHLRKASMVHSGDYKRIKAMLTRLK.

Residues 1-16 (MPKQKTHRASAKRFKR) show a composition bias toward basic residues. The segment at 1–21 (MPKQKTHRASAKRFKRTGSGG) is disordered.

The protein belongs to the bacterial ribosomal protein bL35 family.

The polypeptide is Large ribosomal subunit protein bL35 (Streptococcus pneumoniae serotype 2 (strain D39 / NCTC 7466)).